We begin with the raw amino-acid sequence, 115 residues long: Large ribosomal subunit protein bL19 (115 aa).

Belongs to the bacterial ribosomal protein bL19 family.

In terms of biological role, this protein is located at the 30S-50S ribosomal subunit interface and may play a role in the structure and function of the aminoacyl-tRNA binding site. The sequence is that of Large ribosomal subunit protein bL19 from Francisella tularensis subsp. tularensis (strain WY96-3418).